We begin with the raw amino-acid sequence, 387 residues long: 3-ketoacyl-CoA thiolase (387 aa).

Cysteine 91 functions as the Acyl-thioester intermediate in the catalytic mechanism. Residues histidine 343 and cysteine 373 each act as proton acceptor in the active site.

This sequence belongs to the thiolase-like superfamily. Thiolase family. Heterotetramer of two alpha chains (FadB) and two beta chains (FadA).

The protein localises to the cytoplasm. The catalysed reaction is an acyl-CoA + acetyl-CoA = a 3-oxoacyl-CoA + CoA. Its pathway is lipid metabolism; fatty acid beta-oxidation. Functionally, catalyzes the final step of fatty acid oxidation in which acetyl-CoA is released and the CoA ester of a fatty acid two carbons shorter is formed. This is 3-ketoacyl-CoA thiolase from Shewanella sp. (strain ANA-3).